Reading from the N-terminus, the 464-residue chain is Chromosomal replication initiator protein DnaA (464 aa).

The segment at methionine 1–glutamate 82 is domain I, interacts with DnaA modulators. The segment at glutamate 82–glycine 125 is domain II. Positions glutamine 126–alanine 342 are domain III, AAA+ region. 4 residues coordinate ATP: glycine 170, glycine 172, lysine 173, and threonine 174. Positions asparagine 343–serine 464 are domain IV, binds dsDNA.

The protein belongs to the DnaA family. In terms of assembly, oligomerizes as a right-handed, spiral filament on DNA at oriC.

The protein resides in the cytoplasm. In terms of biological role, plays an essential role in the initiation and regulation of chromosomal replication. ATP-DnaA binds to the origin of replication (oriC) to initiate formation of the DNA replication initiation complex once per cell cycle. Binds the DnaA box (a 9 base pair repeat at the origin) and separates the double-stranded (ds)DNA. Forms a right-handed helical filament on oriC DNA; dsDNA binds to the exterior of the filament while single-stranded (ss)DNA is stabiized in the filament's interior. The ATP-DnaA-oriC complex binds and stabilizes one strand of the AT-rich DNA unwinding element (DUE), permitting loading of DNA polymerase. After initiation quickly degrades to an ADP-DnaA complex that is not apt for DNA replication. Binds acidic phospholipids. This chain is Chromosomal replication initiator protein DnaA, found in Exiguobacterium sibiricum (strain DSM 17290 / CCUG 55495 / CIP 109462 / JCM 13490 / 255-15).